Here is a 470-residue protein sequence, read N- to C-terminus: Argininosuccinate lyase (470 aa).

The protein belongs to the lyase 1 family. Argininosuccinate lyase subfamily.

Its subcellular location is the cytoplasm. It catalyses the reaction 2-(N(omega)-L-arginino)succinate = fumarate + L-arginine. It participates in amino-acid biosynthesis; L-arginine biosynthesis; L-arginine from L-ornithine and carbamoyl phosphate: step 3/3. This Bordetella avium (strain 197N) protein is Argininosuccinate lyase.